Here is a 333-residue protein sequence, read N- to C-terminus: Protein pelota homolog (333 aa).

It belongs to the eukaryotic release factor 1 family. Pelota subfamily. In terms of assembly, monomer. A divalent metal cation serves as cofactor.

The protein localises to the cytoplasm. May function in recognizing stalled ribosomes, interact with stem-loop structures in stalled mRNA molecules, and effect endonucleolytic cleavage of the mRNA. May play a role in the release non-functional ribosomes and degradation of damaged mRNAs. Has endoribonuclease activity. The chain is Protein pelota homolog from Pyrobaculum arsenaticum (strain DSM 13514 / JCM 11321 / PZ6).